The following is a 490-amino-acid chain: Trigger factor (490 aa).

The region spanning 161 to 247 (GDQVIVDIEA…VHEVKEAELP (87 aa)) is the PPIase FKBP-type domain. The segment covering 441 to 460 (AEPAEGTEPAAEEAVTAPEV) has biased composition (low complexity). The segment at 441 to 490 (AEPAEGTEPAAEEAVTAPEVVDGETTPASESAESLAVTETGSRADDDQAS) is disordered. Polar residues predominate over residues 466–481 (TPASESAESLAVTETG).

The protein belongs to the FKBP-type PPIase family. Tig subfamily.

The protein resides in the cytoplasm. The catalysed reaction is [protein]-peptidylproline (omega=180) = [protein]-peptidylproline (omega=0). In terms of biological role, involved in protein export. Acts as a chaperone by maintaining the newly synthesized protein in an open conformation. Functions as a peptidyl-prolyl cis-trans isomerase. In Thermomicrobium roseum (strain ATCC 27502 / DSM 5159 / P-2), this protein is Trigger factor.